Here is a 526-residue protein sequence, read N- to C-terminus: MFS-type transporter clz19 (526 aa).

The interval 1–49 (MNVDTTSPQAPLAGVESKQDGASNEATAKAESTTHDQNESSSFDERPVH) is disordered. A compositionally biased stretch (basic and acidic residues) spans 32–49 (STTHDQNESSSFDERPVH). Asparagine 38 carries N-linked (GlcNAc...) asparagine glycosylation. A helical membrane pass occupies residues 59–79 (ALLAVASFAAAISPASTTTYY). Asparagine 97 is a glycosylation site (N-linked (GlcNAc...) asparagine). A run of 3 helical transmembrane segments spans residues 126 to 143 (VYLV…GLAL), 186 to 206 (AYLT…GGLL), and 214 to 234 (AIFW…LTFF). N-linked (GlcNAc...) asparagine glycans are attached at residues asparagine 238 and asparagine 253. Helical transmembrane passes span 294–314 (FIVC…ISIF), 322–342 (YGYS…GSIL), 384–404 (LTVS…YGWL), 411–431 (VASV…VLIA), 446–466 (ALGA…VAAV), and 473–493 (IGIG…LPAL).

The protein belongs to the major facilitator superfamily.

It is found in the membrane. MFS-type transporter; part of the gene cluster that mediates the biosynthesis of squalestatin S1 (SQS1, also known as zaragozic acid A), a heavily oxidized fungal polyketide that offers potent cholesterol lowering activity by targeting squalene synthase (SS). This Cochliobolus lunatus (Filamentous fungus) protein is MFS-type transporter clz19.